Here is a 465-residue protein sequence, read N- to C-terminus: Protein hedgehog (465 aa).

A lipid anchor (N-palmitoyl cysteine) is attached at C79. Residues E143, E144, D149, T179, E180, D183, and D185 each contribute to the Ca(2+) site. G251 carries Cholesterol glycine ester lipidation.

This sequence belongs to the hedgehog family. Interacts with shf. In terms of processing, the C-terminal part of the hedgehog protein precursor displays an autoproteolysis activity that results in the cleavage of the full-length protein into two parts (N-product and C-product). In addition, the C-terminal part displays a cholesterol transferase activity that results by the covalent attachment of a cholesterol moiety to the C-terminal of the newly generated N-product. The N-product is the active species in both local and long-range signaling, whereas the C-product has no signaling activity. Post-translationally, cholesterylation is required for N-product targeting to lipid rafts and multimerization. N-palmitoylation by Rasp of the hedgehog N-product, within the secretory pathway, is required for the embryonic and larval patterning activities of the hedgehog signal.

It localises to the nucleus. The protein localises to the cytoplasm. The protein resides in the cell membrane. It catalyses the reaction glycyl-L-cysteinyl-[protein] + cholesterol + H(+) = [protein]-C-terminal glycyl cholesterol ester + N-terminal L-cysteinyl-[protein]. Its function is as follows. The C-terminal part of the hedgehog protein precursor displays an autoproteolysis activity that results in the cleavage of the full-length protein into two parts (N-product and C-product). In addition, the C-terminal part displays a cholesterol transferase activity that results by the covalent attachment of a cholesterol moiety to the C-terminal of the newly generated N-product. Once cleaved, the C-product has no signaling activity and diffuses from the cell. The dually lipidated hedgehog protein N-product is a morphogen which is essential for a variety of patterning events during development. Establishes the anterior-posterior axis of the embryonic segments and patterns the larval imaginal disks. Binds to the patched (ptc) receptor, which functions in association with smoothened (smo), to activate the transcription of target genes wingless (wg), decapentaplegic (dpp) and ptc. In the absence of hh, ptc represses the constitutive signaling activity of smo through fused (fu). Essential component of a signaling pathway which regulates the Duox-dependent gut immune response to bacterial uracil; required to activate Cad99C-dependent endosome formation, norpA-dependent Ca2+ mobilization and p38 MAPK, which are essential steps in the Duox-dependent production of reactive oxygen species (ROS) in response to intestinal bacterial infection. During photoreceptor differentiation, it up-regulates transcription of Ubr3, which in turn promotes the hh-signaling pathway by mediating the ubiquitination and degradation of cos. The chain is Protein hedgehog from Drosophila erecta (Fruit fly).